Here is a 115-residue protein sequence, read N- to C-terminus: Cell division topological specificity factor (115 aa).

The interval 93-115 (QLKEPKNQSELDSPETEGTDQKS) is disordered. Residues 104–115 (DSPETEGTDQKS) are compositionally biased toward acidic residues.

Belongs to the MinE family.

Prevents the cell division inhibition by proteins MinC and MinD at internal division sites while permitting inhibition at polar sites. This ensures cell division at the proper site by restricting the formation of a division septum at the midpoint of the long axis of the cell. This Prochlorococcus marinus (strain NATL1A) protein is Cell division topological specificity factor.